Here is a 251-residue protein sequence, read N- to C-terminus: Hydroxyacylglutathione hydrolase (251 aa).

Zn(2+)-binding residues include His-59, His-61, Asp-63, His-64, His-118, Asp-141, and His-179.

It belongs to the metallo-beta-lactamase superfamily. Glyoxalase II family. Monomer. It depends on Zn(2+) as a cofactor.

The enzyme catalyses an S-(2-hydroxyacyl)glutathione + H2O = a 2-hydroxy carboxylate + glutathione + H(+). The protein operates within secondary metabolite metabolism; methylglyoxal degradation; (R)-lactate from methylglyoxal: step 2/2. Thiolesterase that catalyzes the hydrolysis of S-D-lactoyl-glutathione to form glutathione and D-lactic acid. The chain is Hydroxyacylglutathione hydrolase from Prochlorococcus marinus (strain NATL2A).